Consider the following 414-residue polypeptide: Protein MAK11 (414 aa).

S2 is subject to N-acetylserine. WD repeat units follow at residues 50–78 (AHSL…RIYD), 90–135 (SHQG…MVWR), 147–177 (GHTA…RLWN), 189–221 (LRKY…LIYE), 238–267 (LMHI…HFYP), and 298–330 (GHTN…VVWD). 2 positions are modified to phosphoserine: S376 and S380. T382 is modified (phosphothreonine).

Associates with 60S pre-ribosomal particles.

The protein localises to the nucleus. It localises to the nucleolus. It is found in the nucleus membrane. In terms of biological role, essential for cell growth. Plays a role in assembly of 60S pre-ribosomal particles in the nucleolus. Also required for replication of the M1 double-stranded RNA of the L-A virus. This latter function may reflect an enhanced requirement for free 60S ribosomal particles for the translation of viral mRNAs which lack poly-A tails. In Saccharomyces cerevisiae (strain ATCC 204508 / S288c) (Baker's yeast), this protein is Protein MAK11 (MAK11).